We begin with the raw amino-acid sequence, 347 residues long: Protein PET130 (347 aa).

The protein localises to the mitochondrion matrix. This is Protein PET130 (PET130) from Saccharomyces cerevisiae (strain ATCC 204508 / S288c) (Baker's yeast).